The chain runs to 141 residues: Putative pre-16S rRNA nuclease (141 aa).

It belongs to the YqgF nuclease family.

It is found in the cytoplasm. Could be a nuclease involved in processing of the 5'-end of pre-16S rRNA. The protein is Putative pre-16S rRNA nuclease of Sodalis glossinidius (strain morsitans).